The chain runs to 563 residues: MEELKPRFANSCPLTPLGFLERAATVYGDCISVVYDDLSYTWSQTHTRCLRVASCIESCLGVKKGQVVSVVAPNVPAMYELNFAVPMAGVVLNNINTRLNAVTISVMLRHSESKLVFVDQLSVRLVLDAVSLFPKNTPTPLLVLIADNITGENLTVEDREHFVCCYEDLVEKGDDKTFKWVRPISEWDPIVLNYTSGTTSSPKGVVHSHRSVFVVTLDSLIDWGVPKQPVYLWTLPMFHANGWGYTWGIAAVGGTNICLRRFDGEIIFNLIRRHRVTHMCAAPIVLNMLSNSPNAEPLPNPVHVMTGGAPPPAAVLLRTESLGFVISHGYGMTEMLGVVVSCAWKREWNRLPATEQARLKSRQGVRTAAMMEVDVVDPNSGVSVKRDGLTMGEIVLKGSSIMLGYLKNSAATAKCIRADGWFYTGDMAVMHPDGYLEIKDRSKDVIISGGENVSSVEVESALYSHPAVDEAAVVACPDEYWGETPFAFVTLKKGMRVRPTEKEILEYCREKLAHFMVPKVVVFRDKLPKTSTGKIQKFTLKEIVKTMGYSSSSSSYGVGRARM.

ATP contacts are provided by residues 195-203 (TSGTTSSPK), 328-333 (HGYGMT), Asp-426, 438-441 (IKDR), and Lys-534. Residues 263–328 (DGEIIFNLIR…TESLGFVISH (66 aa)) form an SBD1 region. The interval 329-405 (GYGMTEMLGV…LKGSSIMLGY (77 aa)) is SBD2.

It belongs to the ATP-dependent AMP-binding enzyme family.

It is found in the cytoplasm. The protein resides in the cytosol. The protein is Probable CoA ligase CCL11 of Humulus lupulus (European hop).